An 815-amino-acid chain; its full sequence is Protein-glutamine gamma-glutamyltransferase K (815 aa).

Disordered regions lie at residues M1–G40 and D59–D100. Residues W16–E25 are compositionally biased toward pro residues. A Phosphothreonine modification is found at T21. 5 positions are modified to phosphoserine: S23, S80, S83, S90, and S93. Basic and acidic residues predominate over residues D59 to R87. Active-site residues include C375, H434, and D457. N497, D499, E546, and E551 together coordinate Ca(2+). Residues S795–A815 form a disordered region.

The protein belongs to the transglutaminase superfamily. Transglutaminase family. Interacts with PLAAT4. It depends on Ca(2+) as a cofactor. In terms of processing, palmitoylated. Post-translationally, the membrane anchorage region possesses a cluster of five cysteines within which fatty acid(s) may become thioester-linked. It is subject to phorbol ester-stimulated phosphorylation and is hypersensitive to proteolysis, which releases the enzyme in a soluble form. Tyrosine-phosphorylated.

It localises to the membrane. It catalyses the reaction L-glutaminyl-[protein] + L-lysyl-[protein] = [protein]-L-lysyl-N(6)-5-L-glutamyl-[protein] + NH4(+). Its function is as follows. Catalyzes the cross-linking of proteins and the conjugation of polyamines to proteins. Responsible for cross-linking epidermal proteins during formation of the stratum corneum. Involved in cell proliferation. This Canis lupus familiaris (Dog) protein is Protein-glutamine gamma-glutamyltransferase K (TGM1).